We begin with the raw amino-acid sequence, 141 residues long: Large ribosomal subunit protein uL11 (141 aa).

The protein belongs to the universal ribosomal protein uL11 family. Part of the ribosomal stalk of the 50S ribosomal subunit. Interacts with L10 and the large rRNA to form the base of the stalk. L10 forms an elongated spine to which L12 dimers bind in a sequential fashion forming a multimeric L10(L12)X complex. In terms of processing, one or more lysine residues are methylated.

Forms part of the ribosomal stalk which helps the ribosome interact with GTP-bound translation factors. This chain is Large ribosomal subunit protein uL11, found in Prochlorococcus marinus (strain MIT 9211).